Here is a 313-residue protein sequence, read N- to C-terminus: Ribose 1,5-bisphosphate isomerase (313 aa).

Substrate is bound by residues 17–20 and Arg57; that span reads RGAA. Cys121 (proton acceptor) is an active-site residue. The active-site Proton donor is the Asp190. Residues 200–201 and Lys226 contribute to the substrate site; that span reads NK.

Belongs to the eIF-2B alpha/beta/delta subunits family. R15P isomerase subfamily.

The enzyme catalyses alpha-D-ribose 1,5-bisphosphate = D-ribulose 1,5-bisphosphate. Its function is as follows. Catalyzes the isomerization of ribose 1,5-bisphosphate (R15P) to ribulose 1,5-bisphosphate (RuBP), the CO(2) acceptor and substrate for RubisCO. Functions in an archaeal AMP degradation pathway, together with AMP phosphorylase and RubisCO. This Archaeoglobus fulgidus (strain ATCC 49558 / DSM 4304 / JCM 9628 / NBRC 100126 / VC-16) protein is Ribose 1,5-bisphosphate isomerase.